Here is a 1755-residue protein sequence, read N- to C-terminus: E3 ubiquitin-protein ligase UBR2 (1755 aa).

Ala-2 carries the post-translational modification N-acetylalanine. Lys-94 is covalently cross-linked (Glycyl lysine isopeptide (Lys-Gly) (interchain with G-Cter in ubiquitin)). Residues 97-168 (HLCGRVFKVG…EGPYCQKHKL (72 aa)) form a UBR-type zinc finger. Zn(2+) contacts are provided by Cys-99, Cys-112, Cys-115, Cys-124, Cys-127, His-133, and His-136. A peptide is bound at residue Phe-148. Cys-149 is a Zn(2+) binding site. An a peptide-binding site is contributed by Asp-150. Cys-151 contacts Zn(2+). An a peptide-binding site is contributed by Asp-153. Lys-158 is covalently cross-linked (Glycyl lysine isopeptide (Lys-Gly) (interchain with G-Cter in ubiquitin)). Zn(2+) is bound at residue Cys-163. A Glycyl lysine isopeptide (Lys-Gly) (interchain with G-Cter in ubiquitin) cross-link involves residue Lys-165. His-166 lines the Zn(2+) pocket. Residues Lys-248, Lys-255, and Lys-470 each participate in a glycyl lysine isopeptide (Lys-Gly) (interchain with G-Cter in ubiquitin) cross-link. Residue Ser-476 is modified to Phosphoserine. Glycyl lysine isopeptide (Lys-Gly) (interchain with G-Cter in ubiquitin) cross-links involve residues Lys-488, Lys-568, Lys-779, and Lys-789. Residues 1012-1033 (AEAEGTIMEESSRDKDKAERKR) form a disordered region. A coiled-coil region spans residues 1019–1054 (MEESSRDKDKAERKRKAEIARLRREKIMAQMSEMQR). Residues 1021–1033 (ESSRDKDKAERKR) are compositionally biased toward basic and acidic residues. Zn(2+) is bound by residues Cys-1108, Cys-1111, Cys-1168, His-1170, His-1173, Cys-1176, Cys-1210, and Cys-1213. The RING-type; atypical zinc-finger motif lies at 1108-1214 (CILCQEEQEV…NGEFLCPLCE (107 aa)). Glycyl lysine isopeptide (Lys-Gly) (interchain with G-Cter in ubiquitin) cross-links involve residues Lys-1496, Lys-1599, and Lys-1689. Ser-1694 carries the phosphoserine modification. Tyr-1697 carries the phosphotyrosine modification.

This sequence belongs to the E3 ubiquitin-protein ligase UBR1-like family. As to quaternary structure, interacts with UBE2B; promotes the UBE2B-H2A interaction and the ubiquitination of histone H2A by UBE2B and UBR2. Interacts with RECQL4. Interacts with Tex19.1 and Tex19.2; does not lead to Tex19.1 degradation and stabilizes it. Interacts with L1RE1. Interacts with CASP8. Interacts with ATXN3. Interacts with UBE2O. In terms of processing, dephosphorylated by DUSP22 at Ser-1694 and Tyr-1697, leading to subsequent ubiquitination and proteasomal degradation. 'Lys-48'-linked ubiquitinated at Lys-94, Lys-779 and Lys-1599 following DUSP22-mediated dephosphorylation of Ser-1694 and Tyr-1697 which promotes UBR2 interaction with the SCF(FBW1A) E3 ubiquitin-protein ligase complex. In terms of tissue distribution, highly expressed in skeletal muscle. Also expressed in heart, kidney and testis. Expressed in acinar cells of the pancreas. In testes, expressed primarily in spermatocytes. Expressed in cerebellum.

The protein resides in the nucleus. Its subcellular location is the chromosome. It carries out the reaction S-ubiquitinyl-[E2 ubiquitin-conjugating enzyme]-L-cysteine + [acceptor protein]-L-lysine = [E2 ubiquitin-conjugating enzyme]-L-cysteine + N(6)-ubiquitinyl-[acceptor protein]-L-lysine.. The protein operates within protein modification; protein ubiquitination. Functionally, E3 ubiquitin-protein ligase which is a component of the N-end rule pathway. Recognizes and binds to proteins bearing specific N-terminal residues (N-degrons) that are destabilizing according to the N-end rule, leading to their ubiquitination and subsequent degradation. Recognizes both type-1 and type-2 N-degrons, containing positively charged amino acids (Arg, Lys and His) and bulky and hydrophobic amino acids, respectively. Does not ubiquitinate proteins that are acetylated at the N-terminus. In contrast, it strongly binds methylated N-degrons. Plays a critical role in chromatin inactivation and chromosome-wide transcriptional silencing during meiosis via ubiquitination of histone H2A. Binds leucine and is a negative regulator of the leucine-mTOR signaling pathway, thereby controlling cell growth. Required for spermatogenesis, promotes, with Tex19.1, SPO11-dependent recombination foci to accumulate and drive robust homologous chromosome synapsis. Polyubiquitinates LINE-1 retrotransposon encoded, LIRE1, which induces degradation, inhibiting LINE-1 retrotransposon mobilization. Catalyzes ubiquitination and degradation of the N-terminal part of NLRP1B following NLRP1B activation by pathogens and other damage-associated signals: ubiquitination promotes degradation of the N-terminal part and subsequent release of the cleaved C-terminal part of NLRP1B, which polymerizes and forms the NLRP1B inflammasome followed by host cell pyroptosis. Plays a role in T-cell receptor signaling by inducing 'Lys-63'-linked ubiquitination of lymphocyte cell-specific kinase LCK. This activity is regulated by DUSP22, which induces 'Lys-48'-linked ubiquitination of UBR2, leading to its proteasomal degradation by SCF E3 ubiquitin-protein ligase complex. The polypeptide is E3 ubiquitin-protein ligase UBR2 (Mus musculus (Mouse)).